The chain runs to 208 residues: LexA repressor (208 aa).

Positions 30–50 (VREIGKSVGLSSSSTVAAYLE) form a DNA-binding region, H-T-H motif. Active-site for autocatalytic cleavage activity residues include Ser129 and Lys167.

Belongs to the peptidase S24 family. Homodimer.

The catalysed reaction is Hydrolysis of Ala-|-Gly bond in repressor LexA.. In terms of biological role, represses a number of genes involved in the response to DNA damage (SOS response), including recA and lexA. In the presence of single-stranded DNA, RecA interacts with LexA causing an autocatalytic cleavage which disrupts the DNA-binding part of LexA, leading to derepression of the SOS regulon and eventually DNA repair. This chain is LexA repressor, found in Lacticaseibacillus casei (strain BL23) (Lactobacillus casei).